The primary structure comprises 260 residues: Malonyl-[acyl-carrier protein] O-methyltransferase (260 aa).

The protein belongs to the methyltransferase superfamily.

The enzyme catalyses malonyl-[ACP] + S-adenosyl-L-methionine = malonyl-[ACP] methyl ester + S-adenosyl-L-homocysteine. Its pathway is cofactor biosynthesis; biotin biosynthesis. Converts the free carboxyl group of a malonyl-thioester to its methyl ester by transfer of a methyl group from S-adenosyl-L-methionine (SAM). It allows to synthesize pimeloyl-ACP via the fatty acid synthetic pathway. This is Malonyl-[acyl-carrier protein] O-methyltransferase from Herminiimonas arsenicoxydans.